The primary structure comprises 374 residues: Methylthioribose-1-phosphate isomerase (374 aa).

Residue Asp-251 is the Proton donor of the active site.

Belongs to the eIF-2B alpha/beta/delta subunits family. MtnA subfamily.

It localises to the cytoplasm. The protein resides in the nucleus. It catalyses the reaction 5-(methylsulfanyl)-alpha-D-ribose 1-phosphate = 5-(methylsulfanyl)-D-ribulose 1-phosphate. The protein operates within amino-acid biosynthesis; L-methionine biosynthesis via salvage pathway; L-methionine from S-methyl-5-thio-alpha-D-ribose 1-phosphate: step 1/6. Functionally, catalyzes the interconversion of methylthioribose-1-phosphate (MTR-1-P) into methylthioribulose-1-phosphate (MTRu-1-P). The protein is Methylthioribose-1-phosphate isomerase of Oryza sativa subsp. indica (Rice).